Reading from the N-terminus, the 223-residue chain is Dephospho-CoA kinase (223 aa).

The 202-residue stretch at 22-223 folds into the DPCK domain; it reads LIGLSGPSCS…LLQEVKKRGF (202 aa). 30–35 contacts ATP; that stretch reads CSGKNT.

The protein belongs to the CoaE family.

The protein localises to the cytoplasm. The catalysed reaction is 3'-dephospho-CoA + ATP = ADP + CoA + H(+). It functions in the pathway cofactor biosynthesis; coenzyme A biosynthesis; CoA from (R)-pantothenate: step 5/5. Catalyzes the phosphorylation of the 3'-hydroxyl group of dephosphocoenzyme A to form coenzyme A. This Treponema denticola (strain ATCC 35405 / DSM 14222 / CIP 103919 / JCM 8153 / KCTC 15104) protein is Dephospho-CoA kinase.